We begin with the raw amino-acid sequence, 354 residues long: Peptide-N(4)-(N-acetyl-beta-D-glucosaminyl)asparagine amidase F (354 aa).

Residues Met-1–Asn-40 form the signal peptide. A disulfide bridge links Cys-91 with Cys-96. Active-site residues include Asp-100, Glu-158, and Glu-246. Intrachain disulfides connect Cys-244-Cys-248 and Cys-271-Cys-292.

Monomer.

It carries out the reaction Hydrolysis of an N(4)-(acetyl-beta-D-glucosaminyl)asparagine residue in which the glucosamine residue may be further glycosylated, to yield a (substituted) N-acetyl-beta-D-glucosaminylamine and a peptide containing an aspartate residue.. Cleaves an entire glycan from a glycoprotein. Requires that the glycosylated asparagine moiety (reaction 1) be substituted on its amino (R1) and carboxyl (R2) terminus with a polypeptide chain. This Elizabethkingia miricola (Chryseobacterium miricola) protein is Peptide-N(4)-(N-acetyl-beta-D-glucosaminyl)asparagine amidase F (ngl).